The sequence spans 405 residues: Corticosteroid-binding globulin (405 aa).

The N-terminal stretch at 1–22 is a signal peptide; that stretch reads MPLLLYTCLLWLPTSGLWTVQA. N-linked (GlcNAc...) asparagine glycans are attached at residues Asn31, Asn96, and Asn176. Gln254 contributes to the cortisol binding site. Asn260 is a glycosylation site (N-linked (GlcNAc...) asparagine). Asn286 contributes to the cortisol binding site. 2 N-linked (GlcNAc...) asparagine glycosylation sites follow: Asn330 and Asn369. 2 residues coordinate cortisol: His390 and Trp393.

The protein belongs to the serpin family. Post-translationally, N-glycosylated; binds 5 oligosaccharide chains. Glycosylation in position Asn-260 is needed for steroid binding. Plasma; synthesized in liver. Has also been identified in a number of glycocorticoid responsive cells.

The protein resides in the secreted. Its function is as follows. Major transport protein for glucocorticoids and progestins in the blood of almost all vertebrate species. In Homo sapiens (Human), this protein is Corticosteroid-binding globulin (SERPINA6).